Reading from the N-terminus, the 372-residue chain is Delta-type opioid receptor (372 aa).

Residues 1–47 (MEPAPSAGAELQPPLFANASDAYPSACPSAGANASGPPGARSASSLA) lie on the Extracellular side of the membrane. 2 N-linked (GlcNAc...) asparagine glycosylation sites follow: Asn-18 and Asn-33. Residues 48–75 (LAIAITALYSAVCAVGLLGNVLVMFGIV) form a helical membrane-spanning segment. The Cytoplasmic portion of the chain corresponds to 76 to 85 (RYTKMKTATN). A helical membrane pass occupies residues 86–110 (IYIFNLALADALATSTLPFQSAKYL). The Extracellular segment spans residues 111–122 (METWPFGELLCK). Cysteines 121 and 198 form a disulfide. Residues 123–144 (AVLSIDYYNMFTSIFTLTMMSV) traverse the membrane as a helical segment. Residues 145 to 163 (DRYIAVCHPVKALDFRTPA) lie on the Cytoplasmic side of the membrane. The chain crosses the membrane as a helical span at residues 164 to 186 (KAKLINICIWVLASGVGVPIMVM). The Extracellular segment spans residues 187–206 (AVTRPRDGAVVCMLQFPSPS). The helical transmembrane segment at 207 to 238 (WYWDTVTKICVFLFAFVVPILIITVCYGLMLL) threads the bilayer. Over 239-261 (RLRSVRLLSGSKEKDRSLRRITR) the chain is Cytoplasmic. Residues 262 to 284 (MVLVVVGAFVVCWAPIHIFVIVW) form a helical membrane-spanning segment. Residues 285-299 (TLVDIDRRDPLVVAA) lie on the Extracellular side of the membrane. A helical transmembrane segment spans residues 300–321 (LHLCIALGYANSSLNPVLYAFL). Topologically, residues 322–372 (DENFKRCFRQLCRKPCGRPDPSSFSRAREATARERVTACTPSDGPGGGAAA) are cytoplasmic. The S-palmitoyl cysteine moiety is linked to residue Cys-333. Residues 340-372 (PDPSSFSRAREATARERVTACTPSDGPGGGAAA) are disordered. The span at 347-357 (RAREATARERV) shows a compositional bias: basic and acidic residues.

It belongs to the G-protein coupled receptor 1 family. In terms of assembly, may form homooligomers. Forms a heterodimer with OPRM1. Interacts with GPRASP1. Interacts with RTP4; the interaction promotes cell surface localization of the OPRD1-OPRM1 heterodimer. N-glycosylated. Post-translationally, ubiquitinated. A basal ubiquitination seems not to be related to degradation. Ubiquitination is increased upon formation of OPRM1:OPRD1 oligomers leading to proteasomal degradation; the ubiquitination is diminished by RTP4. As to expression, detected in oocytes (at protein level). Detected in brain cortex, hypothalamus, hippocampus and olfactory bulb. Detected in oocytes.

It is found in the cell membrane. G-protein coupled receptor that functions as a receptor for endogenous enkephalins and for a subset of other opioids. Ligand binding causes a conformation change that triggers signaling via guanine nucleotide-binding proteins (G proteins) and modulates the activity of down-stream effectors, such as adenylate cyclase. Signaling leads to the inhibition of adenylate cyclase activity. Inhibits neurotransmitter release by reducing calcium ion currents and increasing potassium ion conductance. Plays a role in the perception of pain and in opiate-mediated analgesia. Plays a role in developing analgesic tolerance to morphine. The chain is Delta-type opioid receptor (OPRD1) from Homo sapiens (Human).